We begin with the raw amino-acid sequence, 535 residues long: Glutamate--cysteine ligase (535 aa).

Belongs to the glutamate--cysteine ligase type 1 family. Type 1 subfamily.

It catalyses the reaction L-cysteine + L-glutamate + ATP = gamma-L-glutamyl-L-cysteine + ADP + phosphate + H(+). It participates in sulfur metabolism; glutathione biosynthesis; glutathione from L-cysteine and L-glutamate: step 1/2. This is Glutamate--cysteine ligase from Pseudomonas savastanoi pv. phaseolicola (strain 1448A / Race 6) (Pseudomonas syringae pv. phaseolicola (strain 1448A / Race 6)).